The primary structure comprises 1007 residues: Glutamate receptor ionotropic, delta-2 (1007 aa).

The signal sequence occupies residues 1–23 (MEVFPLLLFLSFCWSRTWDLATA). Positions 24-345 (DSIIHIGAIF…NAFHKKLEDR (322 aa)) are interaction with CBLN1 homotrimer. Residues 24–566 (DSIIHIGAIF…DMFACLAPFD (543 aa)) lie on the Extracellular side of the membrane. Disulfide bonds link C83–C355, C99–C131, and C298–C310. Residue N293 is glycosylated (N-linked (GlcNAc...) asparagine). Residue N426 is glycosylated (N-linked (GlcNAc...) asparagine). 3 residues coordinate Ca(2+): E531, V534, and D535. A helical membrane pass occupies residues 567-587 (LSLWACIAGTVLLVGLLVYLL). Residues 588-635 (NWLNPPRLQMGSMTSTTLYNSMWFVYGSFVQQGGEVPYTTLATRMMMG) are Cytoplasmic-facing. Residues 636–656 (AWWLFALIVISSYTANLAAFL) form a helical membrane-spanning segment. The Extracellular portion of the chain corresponds to 657 to 830 (TITRIESSIQ…QKGGALDIKS (174 aa)). N-linked (GlcNAc...) asparagine glycosylation is found at N713 and N716. Positions 753, 755, and 757 each coordinate Ca(2+). The chain crosses the membrane as a helical span at residues 831–851 (LAGVFCILAAGIVLSCLIAVL). Topologically, residues 852–1007 (ETWWSRRKGS…GNDPDRGTSI (156 aa)) are cytoplasmic. A Phosphoserine modification is found at S883. At T886 the chain carries Phosphothreonine. Phosphoserine is present on S890. The interval 921–991 (DFRNTHITTT…MSSIPYQPTP (71 aa)) is interaction with AP4M1. Positions 1005 to 1007 (TSI) match the PDZ-binding motif. Residue S1006 is modified to Phosphoserine.

It belongs to the glutamate-gated ion channel (TC 1.A.10.1) family. GRID2 subfamily. In terms of assembly, tetramer; dimer of dimers. Interacts with EML2, MAGI2 (via PDZ domains) and AP4M1. Interacts with BECN1, GOPC, GRID2IP, SHANK1 and SHANK2. Interacts with CBLN2, but not with CBLN4. Interacts with CBLN1 (via C1q domain); the interaction is CBLN1-NRX1 complex formation-dependent; CBLN1-binding is calcium-independent; CBLN1 hexamers anchor GRID2 N-terminal domain dimers to monomeric NRXN1 isoform beta; promotes synaptogenesis and mediates the D-Serine-dependent long term depression signals and AMPA receptor endocytosis. In terms of tissue distribution, expressed selectively in cerebellar Purkinje cells where it is localized in dendritic spines.

Its subcellular location is the postsynaptic cell membrane. The enzyme catalyses Ca(2+)(in) = Ca(2+)(out). The catalysed reaction is Na(+)(in) = Na(+)(out). Functionally, member of the ionotropic glutamate receptor family, which plays a crucial role in synaptic organization and signal transduction in the central nervous system. Although it shares structural features with ionotropic glutamate receptors, does not bind glutamate as a primary ligand. Promotes synaptogenesis and mediates the D-Serine-dependent long term depression signals and AMPA receptor endocytosis of cerebellar parallel fiber-Purkinje cell (PF-PC) synapses through the NRX1B-CBLN1-GRID2 triad complex. In the presence of neurexins and cerebellins, forms cation-selective channels that are proposed to be gated by glycine and D-serine. However, recent research disputes this ligand-gated cation channel activity. Cation-selective ion channel activity can be triggered by GRM1 in Purkinje cells. The polypeptide is Glutamate receptor ionotropic, delta-2 (Grid2) (Mus musculus (Mouse)).